The following is a 348-amino-acid chain: N-acetyl-gamma-glutamyl-phosphate reductase (348 aa).

The active site involves Cys-151.

It belongs to the NAGSA dehydrogenase family. Type 1 subfamily.

It is found in the cytoplasm. It catalyses the reaction N-acetyl-L-glutamate 5-semialdehyde + phosphate + NADP(+) = N-acetyl-L-glutamyl 5-phosphate + NADPH + H(+). It participates in amino-acid biosynthesis; L-arginine biosynthesis; N(2)-acetyl-L-ornithine from L-glutamate: step 3/4. Catalyzes the NADPH-dependent reduction of N-acetyl-5-glutamyl phosphate to yield N-acetyl-L-glutamate 5-semialdehyde. The protein is N-acetyl-gamma-glutamyl-phosphate reductase of Lachnospira eligens (strain ATCC 27750 / DSM 3376 / VPI C15-48 / C15-B4) (Eubacterium eligens).